We begin with the raw amino-acid sequence, 212 residues long: tRNA(Phe) 7-((3-amino-3-carboxypropyl)-4-demethylwyosine(37)-N(4))-methyltransferase 2 (212 aa).

This sequence belongs to the TYW3 family.

The enzyme catalyses 4-demethyl-7-[(3S)-3-amino-3-carboxypropyl]wyosine(37) in tRNA(Phe) + S-adenosyl-L-methionine = 7-[(3S)-3-amino-3-carboxypropyl]wyosine(37) in tRNA(Phe) + S-adenosyl-L-homocysteine + H(+). Its function is as follows. S-adenosyl-L-methionine-dependent methyltransferase that acts as a component of the wyosine derivatives biosynthesis pathway. Probably methylates N-4 position of wybutosine-86 to produce wybutosine-72. The chain is tRNA(Phe) 7-((3-amino-3-carboxypropyl)-4-demethylwyosine(37)-N(4))-methyltransferase 2 from Thermococcus kodakarensis (strain ATCC BAA-918 / JCM 12380 / KOD1) (Pyrococcus kodakaraensis (strain KOD1)).